The sequence spans 156 residues: Transcription antitermination protein NusB (156 aa).

Belongs to the NusB family.

Its function is as follows. Involved in transcription antitermination. Required for transcription of ribosomal RNA (rRNA) genes. Binds specifically to the boxA antiterminator sequence of the ribosomal RNA (rrn) operons. This is Transcription antitermination protein NusB from Clostridium kluyveri (strain ATCC 8527 / DSM 555 / NBRC 12016 / NCIMB 10680 / K1).